Reading from the N-terminus, the 652-residue chain is DNA ligase (652 aa).

NAD(+) is bound by residues 29-33, 78-79, and Glu107; these read DSDYD and SL. Lys109 acts as the N6-AMP-lysine intermediate in catalysis. Positions 130, 164, 278, and 302 each coordinate NAD(+). Residues Cys395, Cys398, Cys413, and Cys418 each coordinate Zn(2+). The 76-residue stretch at 577–652 folds into the BRCT domain; it reads NSDAALFGLT…IEDEDWLRQL (76 aa).

This sequence belongs to the NAD-dependent DNA ligase family. LigA subfamily. Mg(2+) is required as a cofactor. Mn(2+) serves as cofactor.

It catalyses the reaction NAD(+) + (deoxyribonucleotide)n-3'-hydroxyl + 5'-phospho-(deoxyribonucleotide)m = (deoxyribonucleotide)n+m + AMP + beta-nicotinamide D-nucleotide.. In terms of biological role, DNA ligase that catalyzes the formation of phosphodiester linkages between 5'-phosphoryl and 3'-hydroxyl groups in double-stranded DNA using NAD as a coenzyme and as the energy source for the reaction. It is essential for DNA replication and repair of damaged DNA. This chain is DNA ligase, found in Streptococcus pyogenes serotype M12 (strain MGAS2096).